Here is a 295-residue protein sequence, read N- to C-terminus: Large ribosomal subunit protein uL18 (295 aa).

Residues 251–261 (PTPKKKTDFAG) are compositionally biased toward basic and acidic residues. Positions 251 to 295 (PTPKKKTDFAGKTKRWNRKKMTFSQRRDRVKQKKASFLRAKQQEG) are disordered. Over residues 262–271 (KTKRWNRKKM) the composition is skewed to basic residues.

Belongs to the universal ribosomal protein uL18 family. In terms of assembly, component of the large ribosomal subunit (LSU).

The protein resides in the cytoplasm. It is found in the nucleus. Its function is as follows. Component of the ribosome, a large ribonucleoprotein complex responsible for the synthesis of proteins in the cell. The small ribosomal subunit (SSU) binds messenger RNAs (mRNAs) and translates the encoded message by selecting cognate aminoacyl-transfer RNA (tRNA) molecules. The large subunit (LSU) contains the ribosomal catalytic site termed the peptidyl transferase center (PTC), which catalyzes the formation of peptide bonds, thereby polymerizing the amino acids delivered by tRNAs into a polypeptide chain. The nascent polypeptides leave the ribosome through a tunnel in the LSU and interact with protein factors that function in enzymatic processing, targeting, and the membrane insertion of nascent chains at the exit of the ribosomal tunnel. The polypeptide is Large ribosomal subunit protein uL18 (RPL5) (Styela clava (Sea squirt)).